The chain runs to 42 residues: Beta-defensin 13 (42 aa).

Disulfide bonds link C9–C38, C16–C31, and C21–C39.

It belongs to the beta-defensin family. Neutrophilic granules.

The protein resides in the secreted. In terms of biological role, has bactericidal activity. Active against E.coli ML35 and S.aureus 502A. This chain is Beta-defensin 13 (DEFB13), found in Bos taurus (Bovine).